The following is a 665-amino-acid chain: MQGVKKRVEKLHDLLNQYSYEYYVQDNPSVPDSEYDKLLHELIEIEEKYPEFKSTDSPTVRVGGEAQSSFEKVNHDTPMLSLGNAFNEEDLRKFDQRIRDSIGKVEYMCELKIDGLAVSLKYENGRFVQGLTRGDGTTGEDITENLRTIHAIPLKIKEPLNFEVRGEAYMPRRSFIHLNNEKEQNGEQPFANPRNAAAGSLRQLDSKLAAKRKLSVFLYSVNDLTEFNATTQSEALEELDQLGFKTNQERERVSDIEGVLNYIEKWTSKRGSLSYDIDGIVIKVNDLSQQEEMGYTQKSPRWAIAYKFPAEEVITKLLDIELSIGRTGVVTPTAILEPVKVAGTTVSRASLHNEDLIHERDIRIGDSVVIKKAGDIIPEVVKSILDRRPNESEIYHMPTHCPSCGHELVRIEGEVALRCINPKCQAQLIEGLIHFVSRQAMNIDGLGTKIIHQLYENQLIKDVADIFYLKEEDLLPLERMGKKKVDNLLLAIEKSKEQSLEHLLFGLGIRHLGVKASQVLAERYETMDQLFKVTESELIEIQDIGDKLAQSVVTYLENSDIRSLIEKLSNKNVNMSYKGIKTTEIEGHPDFSGKTIVLTGKLEQMTRNEASEWLKMQGAKVTNSVTKSTDIVIAGADAGSKLAKAEKYGTEIWTEAAFIEKQNGI.

Residues aspartate 32–aspartate 36, serine 81–leucine 82, and glutamate 110 contribute to the NAD(+) site. Residue lysine 112 is the N6-AMP-lysine intermediate of the active site. NAD(+) is bound by residues arginine 133, glutamate 167, lysine 283, and lysine 307. Residues cysteine 401, cysteine 404, cysteine 419, and cysteine 424 each contribute to the Zn(2+) site. The BRCT domain maps to glutamate 586–isoleucine 665.

It belongs to the NAD-dependent DNA ligase family. LigA subfamily. Mg(2+) is required as a cofactor. The cofactor is Mn(2+).

It catalyses the reaction NAD(+) + (deoxyribonucleotide)n-3'-hydroxyl + 5'-phospho-(deoxyribonucleotide)m = (deoxyribonucleotide)n+m + AMP + beta-nicotinamide D-nucleotide.. Its function is as follows. DNA ligase that catalyzes the formation of phosphodiester linkages between 5'-phosphoryl and 3'-hydroxyl groups in double-stranded DNA using NAD as a coenzyme and as the energy source for the reaction. It is essential for DNA replication and repair of damaged DNA. This chain is DNA ligase, found in Staphylococcus epidermidis (strain ATCC 35984 / DSM 28319 / BCRC 17069 / CCUG 31568 / BM 3577 / RP62A).